A 1207-amino-acid polypeptide reads, in one-letter code: Systemin receptor SR160 (1207 aa).

Residues 1–34 form the signal peptide; that stretch reads MKAHKTVFNQHPLSLNKLFFVLLLIFFLPPASPA. The Cys pair 1 signature appears at 71-78; it reads CSFTGVSC. 20 LRR repeats span residues 109–131, 135–157, 161–181, 186–207, 213–234, 235–257, 258–280, 282–304, 305–325, 329–350, 353–375, 378–401, 402–423, 428–450, 452–474, 476–499, 500–523, 524–547, 548–570, and 572–594; these read NLES…AKSQ, TLDS…SSFG, NLKS…EMLK, SLQV…PWVS, ELEF…LDFK, NLSY…KDCS, NLQH…LSSC, KLSF…PSES, LQYL…QLAD, TVVE…SLGE, SLEL…TLLK, NIKT…SNLP, KLET…GICK, NLKV…LSNC, QLVS…LGSL, KLKD…MYLQ, ALEN…SNCT, KLNW…GRLS, NLAI…LGNC, and SLIW…LFKQ. Asn-119 carries N-linked (GlcNAc...) asparagine glycosylation. Residues Asn-166 and Asn-196 are each glycosylated (N-linked (GlcNAc...) asparagine). N-linked (GlcNAc...) asparagine glycosylation is found at Asn-235 and Asn-245. N-linked (GlcNAc...) asparagine glycosylation is present at Asn-287. 2 N-linked (GlcNAc...) asparagine glycosylation sites follow: Asn-339 and Asn-363. N-linked (GlcNAc...) asparagine glycans are attached at residues Asn-412 and Asn-449. An N-linked (GlcNAc...) asparagine glycan is attached at Asn-521. Residues Asn-556, Asn-584, Asn-646, and Asn-662 are each glycosylated (N-linked (GlcNAc...) asparagine). LRR repeat units lie at residues 664 to 686, 688 to 711, 712 to 735, and 736 to 758; these read SMIF…LGAM, YLSI…GGLK, NVAI…TSLT, and LLGE…APFD. N-linked (GlcNAc...) asparagine glycosylation is found at Asn-724, Asn-746, and Asn-767. The Cys pair 2 motif lies at 771–779; the sequence is CGYPLPLPC. Residues 803–823 form a helical membrane-spanning segment; the sequence is SVAMGLLFSLFCIFGLIIVAI. The Protein kinase domain occupies 888–1163; that stretch reads FHNDSLVGSG…IQVMAMFKEI (276 aa). ATP is bound by residues 894 to 902 and Lys-916; that span reads VGSGGFGDV. Asp-1014 acts as the Proton acceptor in catalysis.

Belongs to the protein kinase superfamily. Ser/Thr protein kinase family. Post-translationally, glycosylated.

It localises to the cell membrane. The catalysed reaction is L-seryl-[protein] + ATP = O-phospho-L-seryl-[protein] + ADP + H(+). The enzyme catalyses L-threonyl-[protein] + ATP = O-phospho-L-threonyl-[protein] + ADP + H(+). Its function is as follows. Receptor with a serine/threonine-protein kinase activity. Involved in the perception of systemin, a peptide hormone responsible for the systemic activation of defense genes in leaves of wounded plants. May also regulate, in response to brassinosteroid binding, a signaling cascade involved in plant development. In Solanum peruvianum (Peruvian tomato), this protein is Systemin receptor SR160.